The sequence spans 235 residues: 5'-methylthioadenosine/S-adenosylhomocysteine nucleosidase (235 aa).

The active-site Proton acceptor is the Glu-13. Residues Gly-79, Met-154, and 175-176 (ME) each bind substrate. Catalysis depends on Asp-199, which acts as the Proton donor.

Belongs to the PNP/UDP phosphorylase family. MtnN subfamily.

It carries out the reaction S-adenosyl-L-homocysteine + H2O = S-(5-deoxy-D-ribos-5-yl)-L-homocysteine + adenine. It catalyses the reaction S-methyl-5'-thioadenosine + H2O = 5-(methylsulfanyl)-D-ribose + adenine. The catalysed reaction is 5'-deoxyadenosine + H2O = 5-deoxy-D-ribose + adenine. It functions in the pathway amino-acid biosynthesis; L-methionine biosynthesis via salvage pathway; S-methyl-5-thio-alpha-D-ribose 1-phosphate from S-methyl-5'-thioadenosine (hydrolase route): step 1/2. Its function is as follows. Catalyzes the irreversible cleavage of the glycosidic bond in both 5'-methylthioadenosine (MTA) and S-adenosylhomocysteine (SAH/AdoHcy) to adenine and the corresponding thioribose, 5'-methylthioribose and S-ribosylhomocysteine, respectively. Also cleaves 5'-deoxyadenosine, a toxic by-product of radical S-adenosylmethionine (SAM) enzymes, into 5-deoxyribose and adenine. In Chromohalobacter salexigens (strain ATCC BAA-138 / DSM 3043 / CIP 106854 / NCIMB 13768 / 1H11), this protein is 5'-methylthioadenosine/S-adenosylhomocysteine nucleosidase.